Reading from the N-terminus, the 699-residue chain is Homeobox-leucine zipper protein HDG8 (699 aa).

Positions 1 to 31 (MDNNGGGSSGNEQYTSGDAKQNGKRTCHRHT) are disordered. The segment covering 10 to 19 (GNEQYTSGDA) has biased composition (polar residues). Basic residues predominate over residues 22-31 (NGKRTCHRHT). The homeobox DNA-binding region spans 23 to 82 (GKRTCHRHTPQQIQRLEAYFKECPHPDERQRNQLCRELKLEPDQIKFWFQNKRTQSKTQE). The stretch at 89–149 (LLRGENETLQ…LKDHRDRISN (61 aa)) forms a coiled coil. Residues 204-438 (AETDMSLLSE…LERMCERMAL (235 aa)) form the START domain.

Belongs to the HD-ZIP homeobox family. Class IV subfamily. In terms of assembly, interacts with ANT. As to expression, expressed in the embryo at early stage and in the endosperm.

The protein localises to the nucleus. Functionally, probable transcription factor. This is Homeobox-leucine zipper protein HDG8 from Arabidopsis thaliana (Mouse-ear cress).